The sequence spans 270 residues: Shikimate dehydrogenase (NADP(+)) (270 aa).

Residues 14–16 (SKS) and T61 each bind shikimate. The active-site Proton acceptor is K65. Shikimate contacts are provided by N86 and D101. NADP(+) contacts are provided by residues 126 to 130 (GAGGA), 150 to 155 (NRTVDK), and M215. A shikimate-binding site is contributed by Y217. G238 lines the NADP(+) pocket.

The protein belongs to the shikimate dehydrogenase family. As to quaternary structure, homodimer.

It catalyses the reaction shikimate + NADP(+) = 3-dehydroshikimate + NADPH + H(+). The protein operates within metabolic intermediate biosynthesis; chorismate biosynthesis; chorismate from D-erythrose 4-phosphate and phosphoenolpyruvate: step 4/7. In terms of biological role, involved in the biosynthesis of the chorismate, which leads to the biosynthesis of aromatic amino acids. Catalyzes the reversible NADPH linked reduction of 3-dehydroshikimate (DHSA) to yield shikimate (SA). This is Shikimate dehydrogenase (NADP(+)) from Methylobacillus flagellatus (strain ATCC 51484 / DSM 6875 / VKM B-1610 / KT).